The following is a 305-amino-acid chain: Ornithine carbamoyltransferase (305 aa).

Residues S50 to T53, Q77, R101, and H128 to Q131 each bind carbamoyl phosphate. Residues N162, D220, and S224–M225 each bind L-ornithine. Carbamoyl phosphate-binding positions include C260 to L261 and R288.

It belongs to the aspartate/ornithine carbamoyltransferase superfamily. OTCase family.

The protein localises to the cytoplasm. The catalysed reaction is carbamoyl phosphate + L-ornithine = L-citrulline + phosphate + H(+). The protein operates within amino-acid degradation; L-arginine degradation via ADI pathway; carbamoyl phosphate from L-arginine: step 2/2. Reversibly catalyzes the transfer of the carbamoyl group from carbamoyl phosphate (CP) to the N(epsilon) atom of ornithine (ORN) to produce L-citrulline. This chain is Ornithine carbamoyltransferase, found in Akkermansia muciniphila (strain ATCC BAA-835 / DSM 22959 / JCM 33894 / BCRC 81048 / CCUG 64013 / CIP 107961 / Muc).